The chain runs to 398 residues: 1-deoxy-D-xylulose 5-phosphate reductoisomerase (398 aa).

Residues threonine 10, glycine 11, serine 12, isoleucine 13, lysine 37, asparagine 38, and asparagine 124 each contribute to the NADPH site. Lysine 125 is a 1-deoxy-D-xylulose 5-phosphate binding site. Glutamate 126 is a binding site for NADPH. Aspartate 150 is a binding site for Mn(2+). 4 residues coordinate 1-deoxy-D-xylulose 5-phosphate: serine 151, glutamate 152, serine 186, and histidine 209. Glutamate 152 contributes to the Mn(2+) binding site. Glycine 215 is a binding site for NADPH. Residues serine 222, asparagine 227, lysine 228, and glutamate 231 each coordinate 1-deoxy-D-xylulose 5-phosphate. Glutamate 231 contacts Mn(2+).

This sequence belongs to the DXR family. As to quaternary structure, homodimer. Mg(2+) is required as a cofactor. The cofactor is Mn(2+).

The catalysed reaction is 2-C-methyl-D-erythritol 4-phosphate + NADP(+) = 1-deoxy-D-xylulose 5-phosphate + NADPH + H(+). It participates in isoprenoid biosynthesis; isopentenyl diphosphate biosynthesis via DXP pathway; isopentenyl diphosphate from 1-deoxy-D-xylulose 5-phosphate: step 1/6. Catalyzes the NADPH-dependent rearrangement and reduction of 1-deoxy-D-xylulose-5-phosphate (DXP) to 2-C-methyl-D-erythritol 4-phosphate (MEP). This Buchnera aphidicola subsp. Acyrthosiphon pisum (strain APS) (Acyrthosiphon pisum symbiotic bacterium) protein is 1-deoxy-D-xylulose 5-phosphate reductoisomerase.